The sequence spans 370 residues: 2-Hydroxyacid oxidase 1 (370 aa).

The 365-residue stretch at 1–365 (MLPRLVCISD…DKTLVRKNPL (365 aa)) folds into the FMN hydroxy acid dehydrogenase domain. Tyr-26 contacts glyoxylate. Residues 79-81 (ATA), Ser-108, and Gln-130 contribute to the FMN site. Position 132 (Tyr-132) interacts with glyoxylate. Residue Thr-158 coordinates FMN. Residue Arg-167 coordinates glyoxylate. At Lys-184 the chain carries N6-succinyllysine. Phosphoserine is present on residues Ser-194 and Ser-230. FMN contacts are provided by Lys-236 and Ser-258. The glyoxylate site is built by His-260 and Arg-263. His-260 serves as the catalytic Proton acceptor. FMN contacts are provided by residues 291–295 (DGGVR) and 314–315 (GR). Positions 368–370 (SKI) match the Microbody targeting signal motif.

Belongs to the FMN-dependent alpha-hydroxy acid dehydrogenase family. Homotetramer. FMN serves as cofactor. Liver.

It localises to the peroxisome matrix. It catalyses the reaction a (2S)-2-hydroxycarboxylate + O2 = a 2-oxocarboxylate + H2O2. The enzyme catalyses glycolate + O2 = glyoxylate + H2O2. It carries out the reaction glyoxylate + O2 + H2O = oxalate + H2O2 + H(+). The catalysed reaction is 2-hydroxyhexadecanoate + O2 = 2-oxohexadecanoate + H2O2. It catalyses the reaction 2-hydroxyoctanoate + O2 = 2-oxooctanoate + H2O2. It functions in the pathway amino-acid biosynthesis; glycine biosynthesis. Its function is as follows. Broad substrate specificity (S)-2-hydroxy-acid oxidase that preferentially oxidizes glycolate. The glyoxylate produced by the oxidation of glycolate can then be utilized by alanine-glyoxylate aminotransferase for the peroxisomal synthesis of glycine; this pathway appears to be an important step for the detoxification of glyoxylate which, if allowed to accumulate, may be metabolized to oxalate with formation of kidney stones. Can also catalyze the oxidation glyoxylate, and long chain hydroxyacids such as 2-hydroxyhexadecanoate and 2-hydroxyoctanoate. Active in vitro with the artificial electron acceptor 2,6-dichlorophenolindophenol (DCIP), but O2 is believed to be the physiological electron acceptor, leading to the production of H2O2. The protein is 2-Hydroxyacid oxidase 1 of Mus musculus (Mouse).